Reading from the N-terminus, the 639-residue chain is CTTNBP2 N-terminal-like protein (639 aa).

Residues 87-285 (MKQCKNMQER…DLEASHQHSS (199 aa)) adopt a coiled-coil conformation. Ser284 and Ser285 each carry phosphoserine. Disordered stretches follow at residues 387 to 430 (VENG…PCSS), 463 to 490 (RHKF…LSPT), and 511 to 609 (RFTS…AASL). Composition is skewed to low complexity over residues 405–430 (PLSS…PCSS) and 467–477 (QSQADQDQQAS). Ser481, Ser488, Ser523, Ser527, Ser560, Ser563, and Ser568 each carry phosphoserine. Residues 511–529 (RFTSQQGPIKPVSPNSSPF) show a composition bias toward polar residues. 2 positions are modified to phosphothreonine: Thr570 and Thr590. Positions 587 to 600 (PGLTPSPSATTPLT) are enriched in low complexity. Ser592 is subject to Phosphoserine.

As to quaternary structure, interacts with CTTN/cortactin; this interaction may redistribute CTTN to stress fibers. May form homomers. Associates with the core of STRIPAK complexes composed of PP2A catalytic and scaffolding subunits, the striatins (PP2A regulatory subunits), the striatin-associated proteins MOB4, STRIP1 and STRIP2, PDCD10 and members of the STE20 kinases, such as STK24 and STK26.

It localises to the cell projection. The protein resides in the lamellipodium. It is found in the cytoplasm. The protein localises to the cytoskeleton. Its subcellular location is the stress fiber. In terms of biological role, regulates lamellipodial actin dynamics in a CTTN-dependent manner. Associates with core striatin-interacting phosphatase and kinase (STRIPAK) complex to form CTTNBP2NL-STRIPAK complexes. STRIPAK complexes have critical roles in protein (de)phosphorylation and are regulators of multiple signaling pathways including Hippo, MAPK, nuclear receptor and cytoskeleton remodeling. Different types of STRIPAK complexes are involved in a variety of biological processes such as cell growth, differentiation, apoptosis, metabolism and immune regulation. This Homo sapiens (Human) protein is CTTNBP2 N-terminal-like protein.